The chain runs to 193 residues: Ion-translocating oxidoreductase complex subunit A (193 aa).

Helical transmembrane passes span 5 to 25, 47 to 67, 72 to 92, 102 to 122, 134 to 154, and 171 to 191; these read LLLFVGTVLVNNFVLVKFLGL, FVMTLATIFSWIIDHLILVPL, LRTMAFILVIAVVVQFTEMVV, LLGIYLPLITTNCAVLGVALL, ALYGFSAAVGFSLVMVLFAAI, and AIALVTAGLMSLAFMGFSGLV.

It belongs to the NqrDE/RnfAE family. As to quaternary structure, the complex is composed of six subunits: RnfA, RnfB, RnfC, RnfD, RnfE and RnfG.

The protein resides in the cell inner membrane. Its function is as follows. Part of a membrane-bound complex that couples electron transfer with translocation of ions across the membrane. The protein is Ion-translocating oxidoreductase complex subunit A of Cronobacter sakazakii (strain ATCC BAA-894) (Enterobacter sakazakii).